The following is a 78-amino-acid chain: Esculentin-2Vb (78 aa).

Residues 1–22 (MFTMKKSLLLLFFLGTISLSLC) form the signal peptide. Positions 23–39 (EEERGADEEEGDGEKLM) are excised as a propeptide. Cysteine 72 and cysteine 78 are disulfide-bonded.

Expressed by the skin glands.

It localises to the secreted. In terms of biological role, antimicrobial peptide. The sequence is that of Esculentin-2Vb from Odorrana versabilis (Chinese bamboo leaf odorous frog).